The chain runs to 664 residues: DNA primase (664 aa).

Residues 40–64 (CPFHKEKTPSFTVSPDKQFYYCFGC) form a CHC2-type zinc finger. Residues 94 to 104 (GMDVPREERGG) are compositionally biased toward basic and acidic residues. The disordered stretch occupies residues 94–115 (GMDVPREERGGRGHTPRQPTDS). The region spanning 262-344 (DEIMVVEGYM…GKRVRFLFLP (83 aa)) is the Toprim domain. Positions 268, 312, and 314 each coordinate Mg(2+). Residues 483–521 (PRKSWNKDKKPWDGKKWDGKKKWDKGGRGDFKAPQRTPV) form a disordered region. Over residues 487–515 (WNKDKKPWDGKKWDGKKKWDKGGRGDFKA) the composition is skewed to basic and acidic residues.

This sequence belongs to the DnaG primase family. In terms of assembly, monomer. Interacts with DnaB. Zn(2+) is required as a cofactor. The cofactor is Mg(2+).

The catalysed reaction is ssDNA + n NTP = ssDNA/pppN(pN)n-1 hybrid + (n-1) diphosphate.. In terms of biological role, RNA polymerase that catalyzes the synthesis of short RNA molecules used as primers for DNA polymerase during DNA replication. The polypeptide is DNA primase (Pseudomonas aeruginosa (strain ATCC 15692 / DSM 22644 / CIP 104116 / JCM 14847 / LMG 12228 / 1C / PRS 101 / PAO1)).